We begin with the raw amino-acid sequence, 408 residues long: Imidazolonepropionase (408 aa).

Residues His-73 and His-75 each coordinate Fe(3+). Residues His-73 and His-75 each coordinate Zn(2+). Arg-82, Tyr-145, and His-178 together coordinate 4-imidazolone-5-propanoate. Tyr-145 is a binding site for N-formimidoyl-L-glutamate. Residue His-243 coordinates Fe(3+). Position 243 (His-243) interacts with Zn(2+). Gln-246 is a binding site for 4-imidazolone-5-propanoate. Asp-318 contributes to the Fe(3+) binding site. Asp-318 contributes to the Zn(2+) binding site. N-formimidoyl-L-glutamate contacts are provided by Asn-320 and Gly-322. 4-imidazolone-5-propanoate is bound at residue Ser-323.

It belongs to the metallo-dependent hydrolases superfamily. HutI family. It depends on Zn(2+) as a cofactor. Requires Fe(3+) as cofactor.

It localises to the cytoplasm. It catalyses the reaction 4-imidazolone-5-propanoate + H2O = N-formimidoyl-L-glutamate. The protein operates within amino-acid degradation; L-histidine degradation into L-glutamate; N-formimidoyl-L-glutamate from L-histidine: step 3/3. Its function is as follows. Catalyzes the hydrolytic cleavage of the carbon-nitrogen bond in imidazolone-5-propanoate to yield N-formimidoyl-L-glutamate. It is the third step in the universal histidine degradation pathway. In Shewanella sediminis (strain HAW-EB3), this protein is Imidazolonepropionase.